The chain runs to 574 residues: Pescadillo homolog (574 aa).

Residues 289-312 (PSEPNDDTEVDEFPADPENAGLEE) form a disordered region. Residues 292–303 (PNDDTEVDEFPA) show a composition bias toward acidic residues. Residues 323 to 416 (KHKSLFVGLK…LLLPVEDYFP (94 aa)) enclose the BRCT domain. The interval 452-486 (LGLDEEDDDDDDDDEEEDDDDDEEEEDKKLRQLEN) is disordered. Residues 453–477 (GLDEEDDDDDDDDEEEDDDDDEEEE) are compositionally biased toward acidic residues.

The protein belongs to the pescadillo family. As to quaternary structure, component of the PeBoW complex, composed of bop1, pes1 and wdr12. The complex is held together by bop1, which interacts with pes1 via its N-terminal domain and with wdr12 via a high-affinity interaction between the seven-bladed beta-propeller domains of the 2 proteins. The PeBoW complex associates with the 66S pre-ribosome.

It is found in the nucleus. It localises to the nucleolus. The protein localises to the nucleoplasm. Component of the PeBoW complex, which is required for maturation of 28S and 5.8S ribosomal RNAs and formation of the 60S ribosome. Required for neural crest migration and eye development. This chain is Pescadillo homolog (pes1), found in Xenopus laevis (African clawed frog).